The following is a 505-amino-acid chain: Kinesin light chain 3 (505 aa).

Residues 1–20 (MSVQVAAPGSTGLGPERLNP) are disordered. Residues 90-150 (ALSAHVGVLE…EEEKSHLQFL (61 aa)) are a coiled coil. A disordered region spans residues 154 to 197 (RQYDPPEESQRPDSPPRRDSLASLFPSEEEEKKGPEAAGAAAAQ). A compositionally biased stretch (basic and acidic residues) spans 161 to 173 (ESQRPDSPPRRDS). Residue Ser-173 is modified to Phosphoserine. TPR repeat units lie at residues 207–240 (LRTL…LERS), 249–282 (ATML…REQT), 291–324 (AATL…REKV), 333–366 (AKQL…YEAL), and 375–408 (AKTK…EALP). The segment at 409–439 (APLGAPQGGTAGEAQQQVLRRSSSFSKLRES) is disordered. Over residues 421–434 (EAQQQVLRRSSSFS) the composition is skewed to polar residues. Ser-467 carries the post-translational modification Phosphoserine. Residues 486–505 (QHLNEASRTLSASTQDLSPR) form a disordered region. A Phosphothreonine modification is found at Thr-499. The residue at position 503 (Ser-503) is a Phosphoserine.

It belongs to the kinesin light chain family. Oligomer composed of two heavy chains and two light chains. Associates with microtubulin in an ATP-dependent manner. Interacts with KIF5C. Interacts with ODF1. Interacts with LRGUK. Interacts with VDAC2. Expressed in postmeiotic male germ cells (at protein level).

Its subcellular location is the cytoplasm. The protein resides in the cytoskeleton. It is found in the mitochondrion. Functionally, kinesin is a microtubule-associated force-producing protein that may play a role in organelle transport. Plays a role during spermiogenesis in the development of the sperm tail midpiece and in the normal function of spermatozoa. May play a role in the formation of the mitochondrial sheath formation in the developing spermatid midpiece. This Rattus norvegicus (Rat) protein is Kinesin light chain 3 (Klc3).